We begin with the raw amino-acid sequence, 229 residues long: Potassium/proton antiporter CemA (229 aa).

The next 3 helical transmembrane spans lie at 7–27 (FTPL…SLSF), 114–134 (IISF…LVIL), and 190–210 (ISGL…YWIF).

Belongs to the CemA family.

Its subcellular location is the plastid. It is found in the chloroplast inner membrane. It catalyses the reaction K(+)(in) + H(+)(out) = K(+)(out) + H(+)(in). Contributes to K(+)/H(+) antiport activity by supporting proton efflux to control proton extrusion and homeostasis in chloroplasts in a light-dependent manner to modulate photosynthesis. Prevents excessive induction of non-photochemical quenching (NPQ) under continuous-light conditions. Indirectly promotes efficient inorganic carbon uptake into chloroplasts. The sequence is that of Potassium/proton antiporter CemA from Jasminum nudiflorum (Winter jasmine).